We begin with the raw amino-acid sequence, 374 residues long: Putative heme chaperone HemW-like protein (374 aa).

The Radical SAM core domain occupies 1–231; it reads MKLLGLYINI…EKLLKKSGYK (231 aa).

This sequence belongs to the anaerobic coproporphyrinogen-III oxidase family. HemW subfamily.

It is found in the cytoplasm. In terms of biological role, might be a heme chaperone; in E.coli heme binds independently of binding to [4Fe-4S] or S-adenosyl-L-methionine. The sequence is that of Putative heme chaperone HemW-like protein from Buchnera aphidicola subsp. Baizongia pistaciae (strain Bp).